The chain runs to 359 residues: sn-1 linoleoyl-lipid 6-desaturase (359 aa).

Transmembrane regions (helical) follow at residues 45–65 (LIIV…PVIF) and 69–89 (LLGC…VGHD). Residues 88-92 (HDANH) carry the Histidine box-1 motif. Positions 123 to 128 (HNYLHH) match the Histidine box-2 motif. Helical transmembrane passes span 165 to 185 (IWGL…YLVL), 206 to 226 (LLGI…ALGF), and 231 to 251 (VLIG…TIFM). The short motif at 306–310 (HHLFP) is the Histidine box-3 element.

It belongs to the fatty acid desaturase type 2 family. Requires Fe(2+) as cofactor.

The protein resides in the membrane. The catalysed reaction is a 1-[(9Z,12Z)-octadecdienoyl]-2-acyl-glycerolipid + 2 reduced [2Fe-2S]-[ferredoxin] + O2 + 2 H(+) = a 1-[(6Z,9Z,12Z)-octadectrienoyl]-2-acyl-glycerolipid + 2 oxidized [2Fe-2S]-[ferredoxin] + 2 H2O. It functions in the pathway lipid metabolism; polyunsaturated fatty acid biosynthesis. Its function is as follows. Desaturase involved in fatty acid biosynthesis. Introduces a double bond at carbon 6 of linoleoyl group (18:2) attached to the sn-1 position of the glycerol moiety of membrane glycerolipids, leading to the formation of gamma-linolenic acid (GLA). The chain is sn-1 linoleoyl-lipid 6-desaturase from Synechocystis sp. (strain ATCC 27184 / PCC 6803 / Kazusa).